A 110-amino-acid polypeptide reads, in one-letter code: MKNKKIIKKNFEFQEIISKQEFHRNSAFVIYYSKNDKGYFRYGISVGKKLGNAVTRNKIKRQIRMMIQDQIKILPEFSYDIVIIARNRMMQNSFDQNQKELNKLVVRFLK.

Belongs to the RnpA family. In terms of assembly, consists of a catalytic RNA component (M1 or rnpB) and a protein subunit.

It catalyses the reaction Endonucleolytic cleavage of RNA, removing 5'-extranucleotides from tRNA precursor.. In terms of biological role, RNaseP catalyzes the removal of the 5'-leader sequence from pre-tRNA to produce the mature 5'-terminus. It can also cleave other RNA substrates such as 4.5S RNA. The protein component plays an auxiliary but essential role in vivo by binding to the 5'-leader sequence and broadening the substrate specificity of the ribozyme. The polypeptide is Ribonuclease P protein component (Mesoplasma florum (strain ATCC 33453 / NBRC 100688 / NCTC 11704 / L1) (Acholeplasma florum)).